The sequence spans 116 residues: Cyclin-dependent protein kinase inhibitor SMR9 (116 aa).

Basic residues predominate over residues 1–22 (MASKGKKPLRRTTTRRRKRSHF). The interval 1 to 62 (MASKGKKPLR…PVSAESGCCT (62 aa)) is disordered. Low complexity predominate over residues 35 to 56 (VTSTSSTSTSPTSTATPSPVSA).

In terms of biological role, probable cyclin-dependent protein kinase (CDK) inhibitor that functions as a repressor of mitosis in the endoreduplication cell cycle. The protein is Cyclin-dependent protein kinase inhibitor SMR9 of Arabidopsis thaliana (Mouse-ear cress).